A 217-amino-acid polypeptide reads, in one-letter code: Adenylate kinase (217 aa).

An ATP-binding site is contributed by 10 to 15 (GAGKGT). Positions 30–59 (STGDMFRAAMKEETDLGLEAKSYIDKGELV) are NMP. AMP contacts are provided by residues threonine 31, arginine 36, 57-59 (ELV), 85-88 (GFPR), and glutamine 92. Residues 126-163 (GRRICKNCGATYHLVFNPPAKENVCDKCGGELYQREDD) form an LID region. ATP is bound at residue arginine 127. Cysteine 130 and cysteine 133 together coordinate Zn(2+). 136–137 (TY) provides a ligand contact to ATP. Cysteine 150 and cysteine 153 together coordinate Zn(2+). AMP-binding residues include arginine 160 and arginine 171. Lysine 199 lines the ATP pocket.

It belongs to the adenylate kinase family. Monomer.

Its subcellular location is the cytoplasm. The catalysed reaction is AMP + ATP = 2 ADP. It participates in purine metabolism; AMP biosynthesis via salvage pathway; AMP from ADP: step 1/1. Functionally, catalyzes the reversible transfer of the terminal phosphate group between ATP and AMP. Plays an important role in cellular energy homeostasis and in adenine nucleotide metabolism. This chain is Adenylate kinase, found in Bacillus licheniformis (strain ATCC 14580 / DSM 13 / JCM 2505 / CCUG 7422 / NBRC 12200 / NCIMB 9375 / NCTC 10341 / NRRL NRS-1264 / Gibson 46).